Consider the following 392-residue polypeptide: Chorismate synthase (392 aa).

2 residues coordinate NADP(+): arginine 40 and arginine 46. FMN contacts are provided by residues 135–137 (RAS), 256–257 (QA), glycine 300, 315–319 (KPISS), and arginine 341.

The protein belongs to the chorismate synthase family. In terms of assembly, homotetramer. FMNH2 serves as cofactor.

It catalyses the reaction 5-O-(1-carboxyvinyl)-3-phosphoshikimate = chorismate + phosphate. It participates in metabolic intermediate biosynthesis; chorismate biosynthesis; chorismate from D-erythrose 4-phosphate and phosphoenolpyruvate: step 7/7. In terms of biological role, catalyzes the anti-1,4-elimination of the C-3 phosphate and the C-6 proR hydrogen from 5-enolpyruvylshikimate-3-phosphate (EPSP) to yield chorismate, which is the branch point compound that serves as the starting substrate for the three terminal pathways of aromatic amino acid biosynthesis. This reaction introduces a second double bond into the aromatic ring system. The polypeptide is Chorismate synthase (Salinispora tropica (strain ATCC BAA-916 / DSM 44818 / JCM 13857 / NBRC 105044 / CNB-440)).